A 463-amino-acid chain; its full sequence is Adenylosuccinate synthetase, chloroplastic (463 aa).

GTP contacts are provided by residues 44–50 (GDEGKGK) and 72–74 (GHT). The Proton acceptor role is filled by D45. Mg(2+) is bound by residues D45 and G72. IMP is bound by residues 45–48 (DEGK), 70–73 (NAGH), T164, R178, N256, T271, and R335. H73 functions as the Proton donor in the catalytic mechanism. 331-337 (TTTGRPR) lines the substrate pocket. Residues R337, 363 to 365 (KLD), and 446 to 448 (GVG) each bind GTP.

This sequence belongs to the adenylosuccinate synthetase family. In terms of assembly, homodimer. Mg(2+) is required as a cofactor.

The protein resides in the plastid. Its subcellular location is the chloroplast. The catalysed reaction is IMP + L-aspartate + GTP = N(6)-(1,2-dicarboxyethyl)-AMP + GDP + phosphate + 2 H(+). It functions in the pathway purine metabolism; AMP biosynthesis via de novo pathway; AMP from IMP: step 1/2. In terms of biological role, plays an important role in the de novo pathway and in the salvage pathway of purine nucleotide biosynthesis. Catalyzes the first committed step in the biosynthesis of AMP from IMP. The sequence is that of Adenylosuccinate synthetase, chloroplastic from Chlamydomonas reinhardtii (Chlamydomonas smithii).